We begin with the raw amino-acid sequence, 319 residues long: Lambda-crystallin homolog (319 aa).

At alanine 2 the chain carries N-acetylalanine. Serine 3 carries the phosphoserine modification. NAD(+) contacts are provided by residues 16–17 (LI), aspartate 36, glutamate 97, and lysine 102.

This sequence belongs to the 3-hydroxyacyl-CoA dehydrogenase family. In terms of assembly, homodimer. As to expression, widely expressed, with highest levels in liver. Undetectable in skeletal muscle.

It localises to the cytoplasm. The enzyme catalyses L-gulonate + NAD(+) = 3-dehydro-L-gulonate + NADH + H(+). Its activity is regulated as follows. Inhibited by malonate. Its function is as follows. Has high L-gulonate 3-dehydrogenase activity. It also exhibits low dehydrogenase activity toward L-3-hydroxybutyrate (HBA) and L-threonate. This Mus musculus (Mouse) protein is Lambda-crystallin homolog (Cryl1).